Consider the following 488-residue polypeptide: Coiled-coil domain-containing protein 77 (488 aa).

The segment at 21–48 is disordered; it reads GVAVSGPTKRRGMADSLESTPLPSPEDR. S36 carries the phosphoserine modification. A Glycyl lysine isopeptide (Lys-Gly) (interchain with G-Cter in SUMO2) cross-link involves residue K51. 2 coiled-coil regions span residues 55–118 and 208–488; these read SKEL…QVCL and KESS…LRLC. Positions 192-213 are disordered; it reads FKADPKISKRRPSRERKESSEH.

The chain is Coiled-coil domain-containing protein 77 (CCDC77) from Homo sapiens (Human).